Consider the following 68-residue polypeptide: Large ribosomal subunit protein bL31 (68 aa).

Positions 17, 19, 37, and 40 each coordinate Zn(2+).

It belongs to the bacterial ribosomal protein bL31 family. Type A subfamily. Part of the 50S ribosomal subunit. Zn(2+) serves as cofactor.

Its function is as follows. Binds the 23S rRNA. This chain is Large ribosomal subunit protein bL31, found in Clostridium perfringens (strain ATCC 13124 / DSM 756 / JCM 1290 / NCIMB 6125 / NCTC 8237 / Type A).